The following is a 299-amino-acid chain: Protoheme IX farnesyltransferase (299 aa).

Helical transmembrane passes span 25–45 (VVLLMLITSLVGMFLATRAGV), 47–67 (WTVLLFGNLGIALCAGGAAAV), 95–115 (AAALTFAFVLGVSGLALLLTF), 119–139 (LAAWLTLASLIGYAVIYTGFL), 147–167 (IVIGGLAGAAPPLLGWVAVTG), 173–193 (PLLLVLIIFAWTPPHFWALAI), 218–238 (VHILLYTAMLLAVSFMPFAIH), 243–263 (LYLAAAVLLGARFLYWTIALY), and 277–297 (FSIWYLFALFIALLVDHYLLL).

It belongs to the UbiA prenyltransferase family. Protoheme IX farnesyltransferase subfamily.

The protein resides in the cell inner membrane. The catalysed reaction is heme b + (2E,6E)-farnesyl diphosphate + H2O = Fe(II)-heme o + diphosphate. It participates in porphyrin-containing compound metabolism; heme O biosynthesis; heme O from protoheme: step 1/1. Functionally, converts heme B (protoheme IX) to heme O by substitution of the vinyl group on carbon 2 of heme B porphyrin ring with a hydroxyethyl farnesyl side group. This is Protoheme IX farnesyltransferase from Stutzerimonas stutzeri (strain A1501) (Pseudomonas stutzeri).